A 219-amino-acid polypeptide reads, in one-letter code: ATP-dependent Clp protease proteolytic subunit 3 (219 aa).

Serine 112 (nucleophile) is an active-site residue. Histidine 137 is a catalytic residue.

This sequence belongs to the peptidase S14 family. In terms of assembly, fourteen ClpP subunits assemble into 2 heptameric rings which stack back to back to give a disk-like structure with a central cavity, resembling the structure of eukaryotic proteasomes.

The protein resides in the cytoplasm. The enzyme catalyses Hydrolysis of proteins to small peptides in the presence of ATP and magnesium. alpha-casein is the usual test substrate. In the absence of ATP, only oligopeptides shorter than five residues are hydrolyzed (such as succinyl-Leu-Tyr-|-NHMec, and Leu-Tyr-Leu-|-Tyr-Trp, in which cleavage of the -Tyr-|-Leu- and -Tyr-|-Trp bonds also occurs).. Functionally, cleaves peptides in various proteins in a process that requires ATP hydrolysis. Has a chymotrypsin-like activity. Plays a major role in the degradation of misfolded proteins. The chain is ATP-dependent Clp protease proteolytic subunit 3 from Streptomyces avermitilis (strain ATCC 31267 / DSM 46492 / JCM 5070 / NBRC 14893 / NCIMB 12804 / NRRL 8165 / MA-4680).